Reading from the N-terminus, the 181-residue chain is Large ribosomal subunit protein uL6 (181 aa).

The protein belongs to the universal ribosomal protein uL6 family. As to quaternary structure, part of the 50S ribosomal subunit.

Its function is as follows. This protein binds to the 23S rRNA, and is important in its secondary structure. It is located near the subunit interface in the base of the L7/L12 stalk, and near the tRNA binding site of the peptidyltransferase center. This is Large ribosomal subunit protein uL6 from Flavobacterium psychrophilum (strain ATCC 49511 / DSM 21280 / CIP 103535 / JIP02/86).